A 632-amino-acid chain; its full sequence is ATP-dependent RNA helicase mrh4, mitochondrial (632 aa).

Residues 1 to 37 constitute a mitochondrion transit peptide; sequence MNRLGRMSLPLRSPACLICQTRTTTLIPSSWQTARSM. Positions 49–111 are disordered; the sequence is MALSPDVAKP…KEEAQKKESP (63 aa). The segment covering 97-111 has biased composition (basic and acidic residues); that stretch reads RSGDSKEEAQKKESP. A Q motif motif is present at residues 141-174; sequence TSFDQFPLLPVVRNSIVSQALPGLMEVTPTPIQR. A Helicase ATP-binding domain is found at 194–406; it reads DDDEPHYDQF…RKRYPDIKRL (213 aa). ATP is bound at residue 207–214; sequence AETGSGKT. The short motif at 353–356 is the DEAD box element; sequence DEAD. The Helicase C-terminal domain occupies 460–632; sequence FLEPKTKKIL…EGMFRGQALI (173 aa).

Belongs to the DEAD box helicase family. MRH4 subfamily.

The protein localises to the mitochondrion. The catalysed reaction is ATP + H2O = ADP + phosphate + H(+). ATP-binding RNA helicase involved in mitochondrial RNA metabolism. Required for maintenance of mitochondrial DNA. This chain is ATP-dependent RNA helicase mrh4, mitochondrial (mrh4), found in Aspergillus clavatus (strain ATCC 1007 / CBS 513.65 / DSM 816 / NCTC 3887 / NRRL 1 / QM 1276 / 107).